The chain runs to 788 residues: Glucan 1,3-beta-glucosidase (788 aa).

The signal sequence occupies residues 1-42 (MRFSSLLACLGAVGIQAAAIPFQRRVDNTTDSGSLDAAQAAA). N-linked (GlcNAc...) asparagine glycosylation is found at Asn28, Asn233, Asn381, and Asn773.

This sequence belongs to the glycosyl hydrolase 55 family.

The enzyme catalyses Successive hydrolysis of beta-D-glucose units from the non-reducing ends of (1-&gt;3)-beta-D-glucans, releasing alpha-glucose.. In Cochliobolus carbonum (Maize leaf spot fungus), this protein is Glucan 1,3-beta-glucosidase (EXG1).